The primary structure comprises 56 residues: U-limacoditoxin(3)-Dv21 (56 aa).

The N-terminal stretch at 1–19 is a signal peptide; it reads MKKVIMLLLIFALFAYALS. Intrachain disulfides connect Cys26-Cys41, Cys33-Cys46, and Cys40-Cys53.

It belongs to the limacoditoxin-22 family. In terms of tissue distribution, expressed by the venom secretory cell of the spine. The spine is a cuticular structure containing a single large nucleated venom-secreting cell at its base. It is an independent unit capable of producing, storing and injecting venom. On the back of D.vulnerans caterpillars, spines are grouped together by 50 to 100 to form scoli, of which there are eight in D.vulnerans.

Its subcellular location is the secreted. Probable toxin. Shows a moderate antiparasitic activity against the major pathogenic nematode of ruminants (H.contortus, IC(50)=22.1 uM). Does not show insecticidal activities. Does not induce increase in intracellular calcium in mouse DRG neurons, suggesting that it does not induce pain. In Doratifera vulnerans (Mottled cup moth), this protein is U-limacoditoxin(3)-Dv21.